Here is an 899-residue protein sequence, read N- to C-terminus: Gamma-aminobutyric acid type B receptor subunit 1 (899 aa).

The N-terminal stretch at Met1–Ala19 is a signal peptide. At Glu20–Glu447 the chain is on the extracellular side. 5 N-linked (GlcNAc...) asparagine glycosylation sites follow: Asn69, Asn266, Asn339, Asn353, and Asn371. A helical transmembrane segment spans residues Phe448–Leu468. Residues Phe469–Asn487 are Cytoplasmic-facing. Residues Asn488–Ser508 traverse the membrane as a helical segment. At Asp509–Arg525 the chain is on the extracellular side. The chain crosses the membrane as a helical span at residues Val526–Ile546. Over Val547 to Phe616 the chain is Cytoplasmic. A helical membrane pass occupies residues Tyr617 to Ile637. Residues Asp638 to Glu674 lie on the Extracellular side of the membrane. Residues Val675–Ser695 form a helical membrane-spanning segment. Over Tyr696 to Gly713 the chain is Cytoplasmic. Residues Leu714–Ile734 traverse the membrane as a helical segment. The Extracellular segment spans residues His735–Asn741. Residues Phe742–Gly762 traverse the membrane as a helical segment. Residues Pro763–Leu899 are Cytoplasmic-facing. The stretch at Lys791 to Leu842 forms a coiled coil. A disordered region spans residues Asp870–Leu899. The span at Ser890–Leu899 shows a compositional bias: low complexity.

This sequence belongs to the G-protein coupled receptor 3 family. In terms of assembly, may form a heterodimer with gbb-2. In terms of tissue distribution, expressed in the nervous system, including cholinergic motor neurons, but not in GABAergic motor neurons or muscle.

Its subcellular location is the cell membrane. In terms of biological role, component of a heterodimeric G-protein coupled receptor for GABA, formed by gbb-1 and gbb-2. Within the heterodimeric GABA receptor, only gbb-1 seems to bind agonists, while gbb-2 mediates coupling to G proteins. Ligand binding causes a conformation change that triggers signaling via guanine nucleotide-binding proteins (G proteins) and modulates the activity of down-stream effectors, such as adenylate cyclase. Signaling inhibits adenylate cyclase, stimulates phospholipase A2, activates potassium channels, inactivates voltage-dependent calcium-channels and modulates inositol phospholipid hydrolysis. Calcium is required for high affinity binding to GABA. Plays a critical role in the fine-tuning of inhibitory synaptic transmission. Pre-synaptic GABA receptor inhibits neurotransmitter release by down-regulating high-voltage activated calcium channels, whereas postsynaptic GABA receptor decreases neuronal excitability by activating a prominent inwardly rectifying potassium (Kir) conductance that underlies the late inhibitory postsynaptic potentials. Along with gbb-2, may couple to the G(o)-alpha G-protein goa-1 to negatively regulate cholinergic receptor activity in the presence of high levels of acetylcholine in ventral cord motor neurons. As acetylcholine depolarizes body wall muscles, modulation of acetylcholine levels most likely results in the control of locomotory behavior. Acts in neurons to regulate lifespan, and this may be through G-protein-egl-8/PLC-beta signaling to the transcription factor daf-16/FOXO. In Caenorhabditis elegans, this protein is Gamma-aminobutyric acid type B receptor subunit 1.